A 404-amino-acid chain; its full sequence is Synaptic vesicle membrane protein VAT-1 homolog (404 aa).

The tract at residues 1–55 (MSAEREATEAATVAAAAEARAETGAGEGAPSQPPTVEVASDPQPPPAPEASASAS) is disordered. Position 2 is an N-acetylserine (Ser-2). Ser-2 carries the phosphoserine modification. Low complexity predominate over residues 9–24 (EAATVAAAAEARAETG). Phosphoserine is present on residues Ser-31 and Ser-40.

This sequence belongs to the zinc-containing alcohol dehydrogenase family. Quinone oxidoreductase subfamily. As to quaternary structure, interacts with MFN1 and MFN2. As to expression, ubiquitously expressed.

It is found in the cytoplasm. It localises to the mitochondrion outer membrane. Plays a part in calcium-regulated keratinocyte activation in epidermal repair mechanisms. Has no effect on cell proliferation. Possesses ATPase activity. May negatively regulate mitochondrial fusion. This chain is Synaptic vesicle membrane protein VAT-1 homolog (Vat1), found in Rattus norvegicus (Rat).